A 722-amino-acid polypeptide reads, in one-letter code: Probable cation-transporting ATPase HI_0290 (722 aa).

Residues 9–75 (KKISIQIGGM…IIHKTGFSAH (67 aa)) enclose the HMA domain. A metal cation is bound by residues cysteine 20 and cysteine 23. The next 6 membrane-spanning stretches (helical) occupy residues 94-114 (LIVL…MIGG), 118-138 (LMLP…WLAI), 157-177 (VLVS…LFYH), 180-200 (HAMG…VSLG), 340-360 (VFVP…YILT), and 373-393 (VLVI…IMVG). The active-site 4-aspartylphosphate intermediate is aspartate 422. Helical transmembrane passes span 523–543 (IWQI…GAFA), 608–628 (LGHI…LASA), 675–695 (LFFA…GFLS), and 697–717 (IIAG…ALRL). The Mg(2+) site is built by aspartate 617 and aspartate 621.

It belongs to the cation transport ATPase (P-type) (TC 3.A.3) family. Type IB subfamily.

The protein resides in the cell membrane. The enzyme catalyses ATP + H2O = ADP + phosphate + H(+). This is Probable cation-transporting ATPase HI_0290 from Haemophilus influenzae (strain ATCC 51907 / DSM 11121 / KW20 / Rd).